Here is a 353-residue protein sequence, read N- to C-terminus: Photosystem II protein D1 (353 aa).

The residue at position 2 (T2) is an N-acetylthreonine. At T2 the chain carries Phosphothreonine. Transmembrane regions (helical) follow at residues 29 to 46 (YIGW…TATS), 118 to 133 (HFLL…EWEL), and 142 to 156 (WIAV…AATA). H118 contributes to the chlorophyll a binding site. Y126 is a pheophytin a binding site. Residues D170 and E189 each contribute to the [CaMn4O5] cluster site. A helical membrane pass occupies residues 197-218 (FHMLGVAGVFGGSLFSAMHGSL). Chlorophyll a is bound at residue H198. A quinone-binding positions include H215 and 264-265 (SF). Residue H215 participates in Fe cation binding. Position 272 (H272) interacts with Fe cation. Residues 274–288 (FLAAWPVVGIWFTAL) form a helical membrane-spanning segment. The [CaMn4O5] cluster site is built by H332, E333, D342, and A344. A propeptide spanning residues 345–353 (AIEAPSTNG) is cleaved from the precursor.

This sequence belongs to the reaction center PufL/M/PsbA/D family. PSII is composed of 1 copy each of membrane proteins PsbA, PsbB, PsbC, PsbD, PsbE, PsbF, PsbH, PsbI, PsbJ, PsbK, PsbL, PsbM, PsbT, PsbX, PsbY, PsbZ, Psb30/Ycf12, at least 3 peripheral proteins of the oxygen-evolving complex and a large number of cofactors. It forms dimeric complexes. The cofactor is The D1/D2 heterodimer binds P680, chlorophylls that are the primary electron donor of PSII, and subsequent electron acceptors. It shares a non-heme iron and each subunit binds pheophytin, quinone, additional chlorophylls, carotenoids and lipids. D1 provides most of the ligands for the Mn4-Ca-O5 cluster of the oxygen-evolving complex (OEC). There is also a Cl(-1) ion associated with D1 and D2, which is required for oxygen evolution. The PSII complex binds additional chlorophylls, carotenoids and specific lipids.. In terms of processing, tyr-161 forms a radical intermediate that is referred to as redox-active TyrZ, YZ or Y-Z. Post-translationally, C-terminally processed by CTPA; processing is essential to allow assembly of the oxygen-evolving complex and thus photosynthetic growth.

The protein localises to the plastid. The protein resides in the chloroplast thylakoid membrane. It catalyses the reaction 2 a plastoquinone + 4 hnu + 2 H2O = 2 a plastoquinol + O2. Its function is as follows. Photosystem II (PSII) is a light-driven water:plastoquinone oxidoreductase that uses light energy to abstract electrons from H(2)O, generating O(2) and a proton gradient subsequently used for ATP formation. It consists of a core antenna complex that captures photons, and an electron transfer chain that converts photonic excitation into a charge separation. The D1/D2 (PsbA/PsbD) reaction center heterodimer binds P680, the primary electron donor of PSII as well as several subsequent electron acceptors. The chain is Photosystem II protein D1 from Petunia hybrida (Petunia).